A 177-amino-acid polypeptide reads, in one-letter code: Putative peroxiredoxin (177 aa).

The 170-residue stretch at 8-177 (TAKGNEIPDT…ASIDTILTKV (170 aa)) folds into the Thioredoxin domain. The Cysteine sulfenic acid (-SOH) intermediate role is filled by cysteine 64. The Microbody targeting signal signature appears at 175–177 (TKV).

It belongs to the peroxiredoxin family. Prx5 subfamily. In terms of assembly, homodimer; disulfide-linked, upon oxidation.

The catalysed reaction is a hydroperoxide + [thioredoxin]-dithiol = an alcohol + [thioredoxin]-disulfide + H2O. Its function is as follows. Thiol-specific peroxidase that catalyzes the reduction of hydrogen peroxide and organic hydroperoxides to water and alcohols, respectively. Plays a role in cell protection against oxidative stress by detoxifying peroxides and as sensor of hydrogen peroxide-mediated signaling events. This Malassezia furfur (Pityriasis versicolor infection agent) protein is Putative peroxiredoxin.